Here is a 204-residue protein sequence, read N- to C-terminus: Large ribosomal subunit protein bL25 (204 aa).

This sequence belongs to the bacterial ribosomal protein bL25 family. CTC subfamily. Part of the 50S ribosomal subunit; part of the 5S rRNA/L5/L18/L25 subcomplex. Contacts the 5S rRNA. Binds to the 5S rRNA independently of L5 and L18.

Its function is as follows. This is one of the proteins that binds to the 5S RNA in the ribosome where it forms part of the central protuberance. The chain is Large ribosomal subunit protein bL25 from Bordetella bronchiseptica (strain ATCC BAA-588 / NCTC 13252 / RB50) (Alcaligenes bronchisepticus).